Consider the following 252-residue polypeptide: Triosephosphate isomerase (252 aa).

Position 10 to 12 (10 to 12 (NWK)) interacts with substrate. The active-site Electrophile is histidine 96. The Proton acceptor role is filled by glutamate 168. Substrate is bound by residues glycine 174, serine 213, and 234–235 (GG).

It belongs to the triosephosphate isomerase family. As to quaternary structure, homodimer.

The protein resides in the cytoplasm. The enzyme catalyses D-glyceraldehyde 3-phosphate = dihydroxyacetone phosphate. It functions in the pathway carbohydrate biosynthesis; gluconeogenesis. Its pathway is carbohydrate degradation; glycolysis; D-glyceraldehyde 3-phosphate from glycerone phosphate: step 1/1. Functionally, involved in the gluconeogenesis. Catalyzes stereospecifically the conversion of dihydroxyacetone phosphate (DHAP) to D-glyceraldehyde-3-phosphate (G3P). The polypeptide is Triosephosphate isomerase (Idiomarina loihiensis (strain ATCC BAA-735 / DSM 15497 / L2-TR)).